Reading from the N-terminus, the 189-residue chain is HGPRTase-like protein (189 aa).

The protein belongs to the purine/pyrimidine phosphoribosyltransferase family. Archaeal HPRT subfamily.

Functionally, may catalyze a purine salvage reaction, the substrate is unknown. In Halomicrobium mukohataei (strain ATCC 700874 / DSM 12286 / JCM 9738 / NCIMB 13541) (Haloarcula mukohataei), this protein is HGPRTase-like protein.